The following is a 339-amino-acid chain: Glyceraldehyde-3-phosphate dehydrogenase (339 aa).

Residues 12-13, aspartate 39, arginine 84, and serine 127 contribute to the NAD(+) site; that span reads RI. D-glyceraldehyde 3-phosphate is bound by residues 157 to 159, threonine 188, arginine 203, 216 to 217, and arginine 239; these read SCT and TG. Cysteine 158 acts as the Nucleophile in catalysis. Asparagine 320 provides a ligand contact to NAD(+).

It belongs to the glyceraldehyde-3-phosphate dehydrogenase family. As to quaternary structure, homotetramer.

It localises to the cytoplasm. It carries out the reaction D-glyceraldehyde 3-phosphate + phosphate + NAD(+) = (2R)-3-phospho-glyceroyl phosphate + NADH + H(+). Its pathway is carbohydrate degradation; glycolysis; pyruvate from D-glyceraldehyde 3-phosphate: step 1/5. Its function is as follows. Catalyzes the oxidative phosphorylation of glyceraldehyde 3-phosphate (G3P) to 1,3-bisphosphoglycerate (BPG) using the cofactor NAD. The first reaction step involves the formation of a hemiacetal intermediate between G3P and a cysteine residue, and this hemiacetal intermediate is then oxidized to a thioester, with concomitant reduction of NAD to NADH. The reduced NADH is then exchanged with the second NAD, and the thioester is attacked by a nucleophilic inorganic phosphate to produce BPG. The polypeptide is Glyceraldehyde-3-phosphate dehydrogenase (gapA) (Mycobacterium leprae (strain TN)).